Here is a 199-residue protein sequence, read N- to C-terminus: ATP-dependent Clp protease proteolytic subunit (199 aa).

The Nucleophile role is filled by S97. H122 is a catalytic residue.

The protein belongs to the peptidase S14 family. Fourteen ClpP subunits assemble into 2 heptameric rings which stack back to back to give a disk-like structure with a central cavity, resembling the structure of eukaryotic proteasomes.

It is found in the cytoplasm. It carries out the reaction Hydrolysis of proteins to small peptides in the presence of ATP and magnesium. alpha-casein is the usual test substrate. In the absence of ATP, only oligopeptides shorter than five residues are hydrolyzed (such as succinyl-Leu-Tyr-|-NHMec, and Leu-Tyr-Leu-|-Tyr-Trp, in which cleavage of the -Tyr-|-Leu- and -Tyr-|-Trp bonds also occurs).. Cleaves peptides in various proteins in a process that requires ATP hydrolysis. Has a chymotrypsin-like activity. Plays a major role in the degradation of misfolded proteins. The chain is ATP-dependent Clp protease proteolytic subunit from Geobacter metallireducens (strain ATCC 53774 / DSM 7210 / GS-15).